The following is a 740-amino-acid chain: Probable apyrase 7 (740 aa).

The Cytoplasmic segment spans residues 1 to 113; it reads MVFGRITELF…PSTRRKLIRA (113 aa). Residues 114 to 134 traverse the membrane as a helical segment; it reads VMIVMCLFLFAFLVYIVSMYI. Topologically, residues 135–581 are extracellular; sequence YTNWSRGASR…LKSYETLSMK (447 aa). N-linked (GlcNAc...) asparagine glycosylation occurs at N137. 147–157 contributes to the ATP binding site; it reads VVFDCGSTGTR. N208 carries an N-linked (GlcNAc...) asparagine glycan. E284 functions as the Proton acceptor in the catalytic mechanism. 309 to 319 is a binding site for ATP; sequence GALDLGGSSLQ. N-linked (GlcNAc...) asparagine glycosylation is found at N330, N374, N439, and N484. A helical membrane pass occupies residues 582-602; that stretch reads INPIALISILILSLLLLLCAL. The Cytoplasmic portion of the chain corresponds to 603-740; it reads SRVSNCLPRF…SLADSHMLKM (138 aa). The disordered stretch occupies residues 706-740; sequence FWSSPRRSQMRLQSRRSQSREDLSSSLADSHMLKM. Residues 708 to 721 are compositionally biased toward low complexity; sequence SSPRRSQMRLQSRR.

This sequence belongs to the GDA1/CD39 NTPase family. Requires Ca(2+) as cofactor. Detected in mature pollen grains. Also expressed in more diverse tissues such as roots, leaves, stems, pistils and sepals. More particularly expressed in the vascular bundle.

It is found in the membrane. It carries out the reaction a ribonucleoside 5'-triphosphate + 2 H2O = a ribonucleoside 5'-phosphate + 2 phosphate + 2 H(+). Its function is as follows. Catalyzes the hydrolysis of phosphoanhydride bonds of nucleoside tri- and di-phosphates. Involved in the regulation of pollen and anther development. This is Probable apyrase 7 (APY7) from Arabidopsis thaliana (Mouse-ear cress).